Reading from the N-terminus, the 229-residue chain is Orotate phosphoribosyltransferase (229 aa).

Residues R107, K108, K111, H113, and 133–141 (EDLTTAGGS) each bind 5-phospho-alpha-D-ribose 1-diphosphate. T137 is an orotate binding site.

Belongs to the purine/pyrimidine phosphoribosyltransferase family. PyrE subfamily. In terms of assembly, homodimer. Mg(2+) is required as a cofactor.

The catalysed reaction is orotidine 5'-phosphate + diphosphate = orotate + 5-phospho-alpha-D-ribose 1-diphosphate. The protein operates within pyrimidine metabolism; UMP biosynthesis via de novo pathway; UMP from orotate: step 1/2. Catalyzes the transfer of a ribosyl phosphate group from 5-phosphoribose 1-diphosphate to orotate, leading to the formation of orotidine monophosphate (OMP). The protein is Orotate phosphoribosyltransferase of Rhizobium etli (strain ATCC 51251 / DSM 11541 / JCM 21823 / NBRC 15573 / CFN 42).